The primary structure comprises 222 residues: tRNA (guanine-N(1)-)-methyltransferase (222 aa).

S-adenosyl-L-methionine contacts are provided by residues Gly-112 and Ile-132–Leu-137.

The protein belongs to the RNA methyltransferase TrmD family. As to quaternary structure, homodimer.

It localises to the cytoplasm. The catalysed reaction is guanosine(37) in tRNA + S-adenosyl-L-methionine = N(1)-methylguanosine(37) in tRNA + S-adenosyl-L-homocysteine + H(+). Its function is as follows. Specifically methylates guanosine-37 in various tRNAs. The chain is tRNA (guanine-N(1)-)-methyltransferase from Azobacteroides pseudotrichonymphae genomovar. CFP2.